Consider the following 231-residue polypeptide: Transmembrane gamma-carboxyglutamic acid protein 3 (231 aa).

A propeptide spanning residues 1–19 (MAVFLEAKDAHSVLKRFPR) is cleaved from the precursor. The Gla domain occupies 20–65 (ANEFLEELRQGTIERECMEEICSYEEVKEVFENKEKTMEFWKGYPN). Residues 20-78 (ANEFLEELRQGTIERECMEEICSYEEVKEVFENKEKTMEFWKGYPNAVYSVRDPSQSSD) are Extracellular-facing. A 4-carboxyglutamate mark is found at E22, E25, E26, E33, E35, E38, E39, E44, E45, E48, E51, E54, and E58. A disulfide bridge links C36 with C41. Residues 79 to 101 (AMYVVVPLLGVALLIVIALFIIW) traverse the membrane as a helical segment. The Cytoplasmic segment spans residues 102-231 (RCQLQKATRH…IVAANPGADK (130 aa)). Disordered regions lie at residues 140–165 (HSQG…SRGG) and 182–231 (LSRL…GADK). The segment covering 202 to 213 (ESSSEEASVSYS) has biased composition (low complexity).

Gla residues are produced after subsequent post-translational modifications of glutamate by a vitamin K-dependent gamma-carboxylase. Expressed in brain, lung, kidney and heart.

The protein resides in the membrane. The protein is Transmembrane gamma-carboxyglutamic acid protein 3 (PRRG3) of Homo sapiens (Human).